The sequence spans 1060 residues: Carbamoyl phosphate synthase large chain (1060 aa).

The interval 1–401 (MPKRQDIHKI…SLLKAVRSLE (401 aa)) is carboxyphosphate synthetic domain. ATP contacts are provided by arginine 129, arginine 169, glycine 175, glycine 176, arginine 208, isoleucine 210, glutamate 215, glycine 241, valine 242, histidine 243, glutamine 284, and glutamate 298. The region spanning 133–327 (KNLMQKLHEP…IAKMAAKIAV (195 aa)) is the ATP-grasp 1 domain. Mg(2+)-binding residues include glutamine 284, glutamate 298, and asparagine 300. 3 residues coordinate Mn(2+): glutamine 284, glutamate 298, and asparagine 300. Positions 402 to 546 (VGLIHPERPA…YSTYESSTES (145 aa)) are oligomerization domain. A carbamoyl phosphate synthetic domain region spans residues 547–929 (VKSDKPSVLV…ALYKAFEAAG (383 aa)). Positions 671–861 (DQVIKSLKLP…LAQVATLAIL (191 aa)) constitute an ATP-grasp 2 domain. ATP contacts are provided by arginine 707, histidine 746, leucine 748, glutamate 752, glycine 777, isoleucine 778, histidine 779, serine 780, glutamine 820, and glutamate 832. Mg(2+)-binding residues include glutamine 820, glutamate 832, and asparagine 834. Positions 820, 832, and 834 each coordinate Mn(2+). In terms of domain architecture, MGS-like spans 930 to 1060 (MHLPQFGRAL…QAFSISPIKS (131 aa)). Positions 930–1060 (MHLPQFGRAL…QAFSISPIKS (131 aa)) are allosteric domain.

This sequence belongs to the CarB family. As to quaternary structure, composed of two chains; the small (or glutamine) chain promotes the hydrolysis of glutamine to ammonia, which is used by the large (or ammonia) chain to synthesize carbamoyl phosphate. Tetramer of heterodimers (alpha,beta)4. Requires Mg(2+) as cofactor. It depends on Mn(2+) as a cofactor.

The catalysed reaction is hydrogencarbonate + L-glutamine + 2 ATP + H2O = carbamoyl phosphate + L-glutamate + 2 ADP + phosphate + 2 H(+). It catalyses the reaction hydrogencarbonate + NH4(+) + 2 ATP = carbamoyl phosphate + 2 ADP + phosphate + 2 H(+). It participates in amino-acid biosynthesis; L-arginine biosynthesis; carbamoyl phosphate from bicarbonate: step 1/1. Its pathway is pyrimidine metabolism; UMP biosynthesis via de novo pathway; (S)-dihydroorotate from bicarbonate: step 1/3. Its function is as follows. Large subunit of the glutamine-dependent carbamoyl phosphate synthetase (CPSase). CPSase catalyzes the formation of carbamoyl phosphate from the ammonia moiety of glutamine, carbonate, and phosphate donated by ATP, constituting the first step of 2 biosynthetic pathways, one leading to arginine and/or urea and the other to pyrimidine nucleotides. The large subunit (synthetase) binds the substrates ammonia (free or transferred from glutamine from the small subunit), hydrogencarbonate and ATP and carries out an ATP-coupled ligase reaction, activating hydrogencarbonate by forming carboxy phosphate which reacts with ammonia to form carbamoyl phosphate. This chain is Carbamoyl phosphate synthase large chain, found in Lacticaseibacillus paracasei (strain ATCC 334 / BCRC 17002 / CCUG 31169 / CIP 107868 / KCTC 3260 / NRRL B-441) (Lactobacillus paracasei).